A 736-amino-acid chain; its full sequence is DNA topoisomerase 1 (736 aa).

Residues 2–113 (KHLIIVESPA…SYPRIVFHEI (112 aa)) form the Toprim domain. Mg(2+)-binding residues include glutamate 8 and aspartate 82. The region spanning 129-552 (DMSKVNAQQA…DFYYPFMDKI (424 aa)) is the Topo IA-type catalytic domain. The interaction with DNA stretch occupies residues 163–168 (SAGRVQ). The active-site O-(5'-phospho-DNA)-tyrosine intermediate is the tyrosine 297. C4-type zinc fingers lie at residues 572–598 (CPKC…YPKC), 616–642 (CEKC…YPEC), 663–689 (CPEC…YPKC), and 702–725 (CEKC…CIKC).

It belongs to the type IA topoisomerase family. Monomer. It depends on Mg(2+) as a cofactor.

The enzyme catalyses ATP-independent breakage of single-stranded DNA, followed by passage and rejoining.. Releases the supercoiling and torsional tension of DNA, which is introduced during the DNA replication and transcription, by transiently cleaving and rejoining one strand of the DNA duplex. Introduces a single-strand break via transesterification at a target site in duplex DNA. The scissile phosphodiester is attacked by the catalytic tyrosine of the enzyme, resulting in the formation of a DNA-(5'-phosphotyrosyl)-enzyme intermediate and the expulsion of a 3'-OH DNA strand. The free DNA strand then undergoes passage around the unbroken strand, thus removing DNA supercoils. Finally, in the religation step, the DNA 3'-OH attacks the covalent intermediate to expel the active-site tyrosine and restore the DNA phosphodiester backbone. The polypeptide is DNA topoisomerase 1 (Helicobacter pylori (strain ATCC 700392 / 26695) (Campylobacter pylori)).